Reading from the N-terminus, the 513-residue chain is ATP synthase subunit alpha (513 aa).

169 to 176 serves as a coordination point for ATP; that stretch reads GDRQIGKS.

It belongs to the ATPase alpha/beta chains family. As to quaternary structure, F-type ATPases have 2 components, CF(1) - the catalytic core - and CF(0) - the membrane proton channel. CF(1) has five subunits: alpha(3), beta(3), gamma(1), delta(1), epsilon(1). CF(0) has three main subunits: a(1), b(2) and c(9-12). The alpha and beta chains form an alternating ring which encloses part of the gamma chain. CF(1) is attached to CF(0) by a central stalk formed by the gamma and epsilon chains, while a peripheral stalk is formed by the delta and b chains.

It localises to the cell inner membrane. It catalyses the reaction ATP + H2O + 4 H(+)(in) = ADP + phosphate + 5 H(+)(out). Produces ATP from ADP in the presence of a proton gradient across the membrane. The alpha chain is a regulatory subunit. The protein is ATP synthase subunit alpha of Colwellia psychrerythraea (strain 34H / ATCC BAA-681) (Vibrio psychroerythus).